The primary structure comprises 144 residues: NADH dehydrogenase [ubiquinone] 1 alpha subcomplex subunit 13 (144 aa).

N-acetylalanine is present on A2. A helical membrane pass occupies residues 30-51 (LSGYSMFAVGIGALIFGYWRMM).

Belongs to the complex I NDUFA13 subunit family. As to quaternary structure, complex I is composed of 45 different subunits. Interacts with CARD15, but not with CARD4. Interacts with STAT3, but not with STAT1, STAT2 and STAT5A. Interacts with OLFM4.

The protein resides in the mitochondrion inner membrane. It localises to the nucleus. Its function is as follows. Accessory subunit of the mitochondrial membrane respiratory chain NADH dehydrogenase (Complex I), that is believed not to be involved in catalysis. Complex I functions in the transfer of electrons from NADH to the respiratory chain. The immediate electron acceptor for the enzyme is believed to be ubiquinone. Involved in the interferon/all-trans-retinoic acid (IFN/RA) induced cell death. This apoptotic activity is inhibited by interaction with viral IRF1. Prevents the transactivation of STAT3 target genes. May play a role in CARD15-mediated innate mucosal responses and serve to regulate intestinal epithelial cell responses to microbes. This is NADH dehydrogenase [ubiquinone] 1 alpha subcomplex subunit 13 (Ndufa13) from Mus musculus (Mouse).